A 147-amino-acid chain; its full sequence is Hemoglobin subunit epsilon (147 aa).

In terms of domain architecture, Globin spans 3–147 (HFTAEEKAAV…VAIALAHKYH (145 aa)). 2 positions are modified to phosphoserine: S14 and S51. Residues H64 and H93 each coordinate heme b.

This sequence belongs to the globin family. As to quaternary structure, heterotetramer of two alpha chains and two epsilon chains in early embryonic hemoglobin Gower-2; two zeta chains and two epsilon chains in early embryonic hemoglobin Gower-1. As to expression, red blood cells.

The epsilon chain is a beta-type chain of early mammalian embryonic hemoglobin. This is Hemoglobin subunit epsilon (HBE1) from Pongo pygmaeus (Bornean orangutan).